The primary structure comprises 905 residues: V-type proton ATPase 116 kDa subunit a 1 (905 aa).

Topologically, residues methionine 1–glutamate 424 are cytoplasmic. The helical transmembrane segment at isoleucine 425–phenylalanine 443 threads the bilayer. Residues glycine 444–aspartate 445 are Lumenal-facing. Residues methionine 446–lysine 462 form a helical membrane-spanning segment. Over glutamate 463–glutamine 477 the chain is Cytoplasmic. A helical transmembrane segment spans residues threonine 478–serine 507. Residues isoleucine 508–serine 572 lie on the Lumenal side of the membrane. Residues methionine 573–leucine 592 traverse the membrane as a helical segment. Topologically, residues serine 593–phenylalanine 610 are cytoplasmic. Residues isoleucine 611–lysine 631 traverse the membrane as a helical segment. Topologically, residues tryptophan 632–isoleucine 699 are lumenal. The chain crosses the membrane as a helical span at residues leucine 700–leucine 719. Residues tyrosine 720–threonine 788 lie on the Cytoplasmic side of the membrane. Residues isoleucine 789–alanine 813 form a helical membrane-spanning segment. The Lumenal segment spans residues glutamine 814–threonine 834. The helical transmembrane segment at glycine 835–glutamate 873 threads the bilayer. The Cytoplasmic portion of the chain corresponds to phenylalanine 874–leucine 905.

Belongs to the V-ATPase 116 kDa subunit family. V-ATPase is a heteromultimeric enzyme made up of two complexes: the ATP-hydrolytic V1 complex and the proton translocation V0 complex. The V1 complex consists of three catalytic AB heterodimers that form a heterohexamer, three peripheral stalks each consisting of EG heterodimers, one central rotor including subunits D and F, and the regulatory subunits C and H. The proton translocation complex V0 consists of the proton transport subunit a, a ring of proteolipid subunits c9c'', rotary subunit d, subunits e and f, and the accessory subunits vah-19/Ac45 and vah-20/PRR. Interacts with V-type proton ATPase subunit C vha-11. In terms of tissue distribution, ubiquitous expression in embryos. Expressed in gonads, intestine, neurons in the head and motoneurons in the ventral cord of larvae and adults. Expressed in the vulvae and spermathecal uterine valves. Weakly expressed in the pharynx. As to expression, specifically expressed in the nervous system.

It localises to the membrane. Subunit of the V0 complex of vacuolar(H+)-ATPase (V-ATPase), a multisubunit enzyme composed of a peripheral complex (V1) that hydrolyzes ATP and a membrane integral complex (V0) that translocates protons. V-ATPase is responsible for acidifying and maintaining the pH of intracellular compartments and in some cell types, is targeted to the plasma membrane, where it is responsible for acidifying the extracellular environment. Required for assembly and activity of the vacuolar ATPase. Regulates the size of gut granules during embryonic development. In neurons, required for necrotic cell death by promoting intracellular acidification. Required for cell death induced by hypoxia. Required for acidification of synaptic vesicles and the release of neurotransmitters from adult neurons. The chain is V-type proton ATPase 116 kDa subunit a 1 from Caenorhabditis elegans.